The chain runs to 445 residues: Type II methyltransferase M.Bpa9945I (445 aa).

The SAM-dependent MTase C5-type domain maps to 1 to 444; it reads MIVIDLFSGA…RAVKDVINGH (444 aa). Cys-136 is an active-site residue.

Belongs to the class I-like SAM-binding methyltransferase superfamily. C5-methyltransferase family.

It is found in the cytoplasm. The catalysed reaction is a 2'-deoxycytidine in DNA + S-adenosyl-L-methionine = a 5-methyl-2'-deoxycytidine in DNA + S-adenosyl-L-homocysteine + H(+). Its function is as follows. Component of antiviral defense system DISARM (defense island system associated with restriction-modification), composed of DrmE, DrmA, DrmB, DrmC and DrmMII. DISARM is probably a multi-gene restriction module, this subunit is a DNA methylase. Expression of DISARM in B.subtilis (strain BEST7003) confers resistance to phages Nf, phi29, phi105, phi3T, SPO1, SPR and SPP1. Protection is over 10(7)-fold against phi3T, 10(4)-10(5)-fold against Nf, phi29, phi105 and SPR, 100-fold against SPO1 and 10-fold against SPP1. DISARM does not interfere with phage adsorption, but instead interferes with (phi3T) DNA replication early in its cycle, preventing replication, circularization and lysogeny and probably causes phage DNA degradation (DNA is degraded in SPP1-infected cells). Expression of this methylase alone leads to highly methylated phage, however they are still susceptible to the DISARM system. In terms of biological role, a methylase, recognizes the double-stranded sequence 5'-CCWGG-3', methylates C-2 on both strands. Phage Nf does not have any 5'-CCWGG-3' motifs but is still targeted by the DISARM system. The polypeptide is Type II methyltransferase M.Bpa9945I (Bacillus paralicheniformis (strain ATCC 9945a / NCIMB 11709 / CD-2)).